Here is a 339-residue protein sequence, read N- to C-terminus: Ferrochelatase (339 aa).

Residues His209 and Glu290 each contribute to the Fe cation site.

Belongs to the ferrochelatase family.

Its subcellular location is the cytoplasm. The catalysed reaction is heme b + 2 H(+) = protoporphyrin IX + Fe(2+). It functions in the pathway porphyrin-containing compound metabolism; protoheme biosynthesis; protoheme from protoporphyrin-IX: step 1/1. Catalyzes the ferrous insertion into protoporphyrin IX. This Rhizobium meliloti (strain 1021) (Ensifer meliloti) protein is Ferrochelatase.